Consider the following 273-residue polypeptide: Glutamate 5-kinase (273 aa).

Residue Lys15 coordinates ATP. Substrate-binding residues include Ser55, Asp142, and Asn158. Residues 178–179 (SD) and 220–226 (TGGMLSK) each bind ATP.

Belongs to the glutamate 5-kinase family.

The protein resides in the cytoplasm. The catalysed reaction is L-glutamate + ATP = L-glutamyl 5-phosphate + ADP. It participates in amino-acid biosynthesis; L-proline biosynthesis; L-glutamate 5-semialdehyde from L-glutamate: step 1/2. Its function is as follows. Catalyzes the transfer of a phosphate group to glutamate to form L-glutamate 5-phosphate. The polypeptide is Glutamate 5-kinase (Streptococcus pyogenes serotype M1).